The chain runs to 266 residues: Phosphatidylglycerol--prolipoprotein diacylglyceryl transferase (266 aa).

7 helical membrane-spanning segments follow: residues 10 to 30 (VAIA…LVGI), 56 to 76 (LVFW…VFFY), 92 to 112 (WEGG…TWWF), 120 to 140 (FFEL…AGRI), 172 to 192 (PSQL…LWFY), 200 to 220 (MAVS…VEFV), and 234 to 254 (WLTM…GLIA). Position 139 (Arg139) interacts with a 1,2-diacyl-sn-glycero-3-phospho-(1'-sn-glycerol).

This sequence belongs to the Lgt family.

Its subcellular location is the cell inner membrane. It catalyses the reaction L-cysteinyl-[prolipoprotein] + a 1,2-diacyl-sn-glycero-3-phospho-(1'-sn-glycerol) = an S-1,2-diacyl-sn-glyceryl-L-cysteinyl-[prolipoprotein] + sn-glycerol 1-phosphate + H(+). It functions in the pathway protein modification; lipoprotein biosynthesis (diacylglyceryl transfer). In terms of biological role, catalyzes the transfer of the diacylglyceryl group from phosphatidylglycerol to the sulfhydryl group of the N-terminal cysteine of a prolipoprotein, the first step in the formation of mature lipoproteins. The protein is Phosphatidylglycerol--prolipoprotein diacylglyceryl transferase of Ectopseudomonas mendocina (strain ymp) (Pseudomonas mendocina).